We begin with the raw amino-acid sequence, 301 residues long: Ribonuclease Z (301 aa).

Histidine 60, histidine 62, aspartate 64, histidine 65, histidine 137, aspartate 207, and histidine 265 together coordinate Zn(2+). Aspartate 64 functions as the Proton acceptor in the catalytic mechanism.

Belongs to the RNase Z family. In terms of assembly, homodimer. Zn(2+) is required as a cofactor.

The catalysed reaction is Endonucleolytic cleavage of RNA, removing extra 3' nucleotides from tRNA precursor, generating 3' termini of tRNAs. A 3'-hydroxy group is left at the tRNA terminus and a 5'-phosphoryl group is left at the trailer molecule.. Zinc phosphodiesterase, which displays some tRNA 3'-processing endonuclease activity. Probably involved in tRNA maturation, by removing a 3'-trailer from precursor tRNA. The polypeptide is Ribonuclease Z (Exiguobacterium sp. (strain ATCC BAA-1283 / AT1b)).